The chain runs to 495 residues: Serine/threonine-protein kinase F (495 aa).

Residues 46–314 enclose the Protein kinase domain; that stretch reads YLPVKLLGQG…ASAEEVLAVL (269 aa). ATP contacts are provided by residues 52–60 and lysine 77; that span reads LGQGGFGAA. The active-site Proton acceptor is the aspartate 187. The interval 316–354 is disordered; that stretch reads GGKGNQGKAPPGATVSTPQGTNTQIQPTPASSASPLTAP. Positions 329 to 350 are enriched in polar residues; sequence TVSTPQGTNTQIQPTPASSASP.

It belongs to the protein kinase superfamily. Ser/Thr protein kinase family.

The catalysed reaction is L-seryl-[protein] + ATP = O-phospho-L-seryl-[protein] + ADP + H(+). It carries out the reaction L-threonyl-[protein] + ATP = O-phospho-L-threonyl-[protein] + ADP + H(+). This chain is Serine/threonine-protein kinase F (spkF), found in Synechocystis sp. (strain ATCC 27184 / PCC 6803 / Kazusa).